The chain runs to 338 residues: Ketol-acid reductoisomerase (NADP(+)) (338 aa).

The KARI N-terminal Rossmann domain maps to 1–181 (MKVFYDKDAD…GGGRAGIIET (181 aa)). NADP(+) is bound by residues 24-27 (YGSQ), Arg-47, and Ser-52. His-107 is an active-site residue. An NADP(+)-binding site is contributed by Gly-133. Residues 182–327 (NFREETETDL…SKLRAMMPWI (146 aa)) enclose the KARI C-terminal knotted domain. Residues Asp-190, Glu-194, Glu-226, and Glu-230 each coordinate Mg(2+). Ser-251 lines the substrate pocket.

It belongs to the ketol-acid reductoisomerase family. Mg(2+) serves as cofactor.

The enzyme catalyses (2R)-2,3-dihydroxy-3-methylbutanoate + NADP(+) = (2S)-2-acetolactate + NADPH + H(+). It carries out the reaction (2R,3R)-2,3-dihydroxy-3-methylpentanoate + NADP(+) = (S)-2-ethyl-2-hydroxy-3-oxobutanoate + NADPH + H(+). It functions in the pathway amino-acid biosynthesis; L-isoleucine biosynthesis; L-isoleucine from 2-oxobutanoate: step 2/4. The protein operates within amino-acid biosynthesis; L-valine biosynthesis; L-valine from pyruvate: step 2/4. Involved in the biosynthesis of branched-chain amino acids (BCAA). Catalyzes an alkyl-migration followed by a ketol-acid reduction of (S)-2-acetolactate (S2AL) to yield (R)-2,3-dihydroxy-isovalerate. In the isomerase reaction, S2AL is rearranged via a Mg-dependent methyl migration to produce 3-hydroxy-3-methyl-2-ketobutyrate (HMKB). In the reductase reaction, this 2-ketoacid undergoes a metal-dependent reduction by NADPH to yield (R)-2,3-dihydroxy-isovalerate. The protein is Ketol-acid reductoisomerase (NADP(+)) of Burkholderia mallei (strain NCTC 10229).